Consider the following 455-residue polypeptide: L-serine dehydratase (455 aa).

It belongs to the iron-sulfur dependent L-serine dehydratase family. Requires [4Fe-4S] cluster as cofactor.

It carries out the reaction L-serine = pyruvate + NH4(+). It participates in carbohydrate biosynthesis; gluconeogenesis. The chain is L-serine dehydratase (sdaA) from Helicobacter pylori (strain J99 / ATCC 700824) (Campylobacter pylori J99).